The chain runs to 179 residues: Replication restart protein DnaT (179 aa).

Positions 154–179 (SNGGLPKRDVNTVSEPDSQIPPGFRG) are disordered.

The protein belongs to the DnaT family. In terms of assembly, homooligomerizes. Interacts with PriB. Component of the replication restart primosome. Primosome assembly occurs via a 'hand-off' mechanism. PriA binds to replication forks, subsequently PriB then DnaT bind; DnaT then displaces ssDNA to generate the helicase loading substrate.

In terms of biological role, involved in the restart of stalled replication forks, which reloads the replicative helicase on sites other than the origin of replication. Can function in multiple replication restart pathways. Displaces ssDNA from a PriB-ssDNA complex. Probably forms a spiral filament on ssDNA. The chain is Replication restart protein DnaT from Escherichia coli O127:H6 (strain E2348/69 / EPEC).